The chain runs to 374 residues: Tomoregulin-2 (374 aa).

Residues 1–39 (MVLWESPRQCSSWTLCEGFCWLLLLPVMLLIVARPVKLA) form the signal peptide. The Extracellular portion of the chain corresponds to 40–320 (AFPTSLSDCQ…VPGPVRFQYV (281 aa)). Residue Asn-55 is glycosylated (N-linked (GlcNAc...) asparagine). Kazal-like domains are found at residues 90–137 (VCQF…SCAT) and 181–229 (VCNI…RCQD). 9 disulfides stabilise this stretch: Cys-91–Cys-121, Cys-95–Cys-114, Cys-103–Cys-135, Cys-182–Cys-213, Cys-186–Cys-206, Cys-195–Cys-227, Cys-265–Cys-278, Cys-273–Cys-289, and Cys-291–Cys-300. An EGF-like domain is found at 261–301 (HHIPCPEHYNGFCMHGKCEHSINMQEPSCRCDAGYTGQHCE). The required for shedding stretch occupies residues 303–320 (KDYSVLYVVPGPVRFQYV). Residues 321-341 (LIAAVIGTIQIAVICVVVLCI) form a helical membrane-spanning segment. Over 342-374 (TRKCPRSNRIHRQKQNTGHYSSDNTTRASTRLI) the chain is Cytoplasmic. The tract at residues 353–374 (RQKQNTGHYSSDNTTRASTRLI) is disordered. Residues 356–374 (QNTGHYSSDNTTRASTRLI) show a composition bias toward polar residues.

It belongs to the tomoregulin family. O-glycosylated; contains chondroitin sulfate glycosaminoglycans. In terms of processing, a soluble form (TMEFF2-ECD) is produced by proteolytic shedding. This shedding can be induced by phorbol ester or pro-inflammatory cytokines such as TNFalpha, and is mediated by a metalloproteinase ADAM.

The protein resides in the membrane. Functionally, may be a survival factor for hippocampal and mesencephalic neurons. The shedded form may up-regulate cell proliferation. In Bos taurus (Bovine), this protein is Tomoregulin-2 (TMEFF2).